The primary structure comprises 35 residues: Defensin-B (35 aa).

3 cysteine pairs are disulfide-bonded: cysteine 4/cysteine 25, cysteine 10/cysteine 33, and cysteine 14/cysteine 35.

The protein resides in the secreted. Its function is as follows. Has antibacterial activity against M.luteus and E.coli. The polypeptide is Defensin-B (Mytilus edulis (Blue mussel)).